A 242-amino-acid polypeptide reads, in one-letter code: Triosephosphate isomerase (242 aa).

8 to 10 (NWK) is a binding site for substrate. H98 acts as the Electrophile in catalysis. E167 serves as the catalytic Proton acceptor. Substrate is bound by residues G173, S205, and 226-227 (GG).

The protein belongs to the triosephosphate isomerase family. Homodimer.

The protein localises to the cytoplasm. It carries out the reaction D-glyceraldehyde 3-phosphate = dihydroxyacetone phosphate. Its pathway is carbohydrate biosynthesis; gluconeogenesis. It participates in carbohydrate degradation; glycolysis; D-glyceraldehyde 3-phosphate from glycerone phosphate: step 1/1. Involved in the gluconeogenesis. Catalyzes stereospecifically the conversion of dihydroxyacetone phosphate (DHAP) to D-glyceraldehyde-3-phosphate (G3P). In Mesomycoplasma hyopneumoniae (strain 232) (Mycoplasma hyopneumoniae), this protein is Triosephosphate isomerase.